The primary structure comprises 315 residues: Adenine deaminase (315 aa).

The Zn(2+) site is built by H14, H16, and H194. The Proton donor role is filled by E197. D275 lines the Zn(2+) pocket. D276 provides a ligand contact to substrate.

This sequence belongs to the metallo-dependent hydrolases superfamily. Adenosine and AMP deaminases family. Adenine deaminase type 2 subfamily. Requires Zn(2+) as cofactor.

It catalyses the reaction adenine + H2O + H(+) = hypoxanthine + NH4(+). In terms of biological role, catalyzes the hydrolytic deamination of adenine to hypoxanthine. Plays an important role in the purine salvage pathway and in nitrogen catabolism. The protein is Adenine deaminase of Pseudomonas putida (strain ATCC 47054 / DSM 6125 / CFBP 8728 / NCIMB 11950 / KT2440).